We begin with the raw amino-acid sequence, 1220 residues long: von Willebrand factor A domain-containing protein 5B1 (1220 aa).

An N-terminal signal peptide occupies residues 1–18; the sequence is MPGLLNWITGAALPLTAS. Residues 19–149 enclose the VIT domain; the sequence is DVTSCVSGYA…NVTIFISTSS (131 aa). The N-linked (GlcNAc...) asparagine glycan is linked to Asn-140. In terms of domain architecture, VWFA spans 361 to 529; that stretch reads EFIFLIDRSS…RLQPKMVKSL (169 aa). N-linked (GlcNAc...) asparagine glycosylation is present at Asn-650. Residues 715-807 are disordered; that stretch reads NSGQDLNQGP…SPSRPATPAP (93 aa). Residues 757–774 are compositionally biased toward basic and acidic residues; the sequence is VRERTSDSRSPGDLEPSH. Positions 796 to 807 are enriched in low complexity; it reads RASPSRPATPAP. Tyr-881 bears the Phosphotyrosine mark. 2 disordered regions span residues 937 to 962 and 976 to 995; these read RGTS…GKFQ and EARS…QRSL. N-linked (GlcNAc...) asparagine glycosylation occurs at Asn-1017. The span at 1093 to 1111 shows a compositional bias: polar residues; sequence TTRPSESKTPSPQLCTSSP. Residues 1093 to 1115 are disordered; it reads TTRPSESKTPSPQLCTSSPPRHP.

The protein resides in the secreted. In Homo sapiens (Human), this protein is von Willebrand factor A domain-containing protein 5B1 (VWA5B1).